The following is a 389-amino-acid chain: 26S proteasome non-ATPase regulatory subunit 6 (389 aa).

A PCI domain is found at 193 to 361; it reads DFKQAAELFL…EVVETNRPDS (169 aa).

This sequence belongs to the proteasome subunit S10 family. Component of the 19S proteasome regulatory particle complex. The 26S proteasome consists of a 20S core particle (CP) and two 19S regulatory subunits (RP). The regulatory particle is made of a lid composed of 9 subunits including PSMD6, a base containing 6 ATPases and few additional components.

Its function is as follows. Component of the 26S proteasome, a multiprotein complex involved in the ATP-dependent degradation of ubiquitinated proteins. This complex plays a key role in the maintenance of protein homeostasis by removing misfolded or damaged proteins, which could impair cellular functions, and by removing proteins whose functions are no longer required. Therefore, the proteasome participates in numerous cellular processes, including cell cycle progression, apoptosis, or DNA damage repair. This chain is 26S proteasome non-ATPase regulatory subunit 6 (PSMD6), found in Bos taurus (Bovine).